We begin with the raw amino-acid sequence, 339 residues long: Leucine-rich repeat-containing protein 75A (339 aa).

The segment at 1 to 25 is disordered; it reads MGTRQTKGSLAERASPGAAPGPRRE. Positions 11–21 are enriched in low complexity; that stretch reads AERASPGAAPG. LRR repeat units lie at residues 203-216 and 228-241; these read VDSV…LTDD and LPRL…GNRL. The segment at 294–339 is disordered; that stretch reads LPTILELGEGPGTGEEAREGTDQQDPIGSPVTPARGQESTECVIQT. Position 322 is a phosphoserine (Ser-322). Thr-325 carries the phosphothreonine modification. A compositionally biased stretch (polar residues) spans 330 to 339; that stretch reads QESTECVIQT.

It belongs to the LRRC75 family.

This chain is Leucine-rich repeat-containing protein 75A (Lrrc75a), found in Mus musculus (Mouse).